We begin with the raw amino-acid sequence, 267 residues long: MMNHKKGISVKINTKELVLKISLPALAVVIWELLAIYINNPVILPRVEAVINVLIHPFQGILGTGSLIDNTIISIKRVISGFLLASAVAIPLGILMGYYRTVNSLCDTLIELLRPIPPLAWVPLSLAWFGLGEMSMIFIIFIGAFFPILINTISGVKGVPTPLIEAALTLGAKGRDILIKVVIPASSPSILTGLRVGAGIAWMCVVAAEMLPSSNAGLGYLIMYAYSLSRMDVVIACMIIIGLIGLVLDRGLRYIEDKYFVWRKMMK.

7 helical membrane-spanning segments follow: residues 18–38 (VLKI…AIYI), 48–68 (EAVI…GSLI), 78–98 (VISG…LMGY), 115–135 (PIPP…GEMS), 136–156 (MIFI…ISGV), 188–208 (PSIL…VVAA), and 228–248 (LSRM…GLVL). The 182-residue stretch at 71–252 (TIISIKRVIS…LIGLVLDRGL (182 aa)) folds into the ABC transmembrane type-1 domain.

The protein belongs to the binding-protein-dependent transport system permease family. CysTW subfamily.

Its subcellular location is the cell membrane. In terms of biological role, probably part of a binding-protein-dependent transport system. Probably responsible for the translocation of the substrate across the membrane. This Methanocaldococcus jannaschii (strain ATCC 43067 / DSM 2661 / JAL-1 / JCM 10045 / NBRC 100440) (Methanococcus jannaschii) protein is Putative ABC transporter permease protein MJ0413.